Reading from the N-terminus, the 541-residue chain is Anthranilate synthase component 1 (541 aa).

L-tryptophan is bound by residues S61 and 311 to 313 (PYM). Residue 348–349 (GT) participates in chorismate binding. E381 provides a ligand contact to Mg(2+). Residues Y469, R489, 503–505 (GAG), and G505 contribute to the chorismate site. Position 518 (E518) interacts with Mg(2+).

This sequence belongs to the anthranilate synthase component I family. As to quaternary structure, heterotetramer consisting of two non-identical subunits: a beta subunit (TrpG) and a large alpha subunit (TrpE). Requires Mg(2+) as cofactor.

The enzyme catalyses chorismate + L-glutamine = anthranilate + pyruvate + L-glutamate + H(+). It functions in the pathway amino-acid biosynthesis; L-tryptophan biosynthesis; L-tryptophan from chorismate: step 1/5. Its activity is regulated as follows. Feedback inhibited by tryptophan. In terms of biological role, part of a heterotetrameric complex that catalyzes the two-step biosynthesis of anthranilate, an intermediate in the biosynthesis of L-tryptophan. In the first step, the glutamine-binding beta subunit (TrpG) of anthranilate synthase (AS) provides the glutamine amidotransferase activity which generates ammonia as a substrate that, along with chorismate, is used in the second step, catalyzed by the large alpha subunit of AS (TrpE) to produce anthranilate. In the absence of TrpG, TrpE can synthesize anthranilate directly from chorismate and high concentrations of ammonia. The chain is Anthranilate synthase component 1 (trpE) from Vibrio parahaemolyticus serotype O3:K6 (strain RIMD 2210633).